We begin with the raw amino-acid sequence, 1093 residues long: Probable cellulose synthase A catalytic subunit 3 [UDP-forming] (1093 aa).

The Cytoplasmic segment spans residues 1–280 (MEASAGLVAG…PSSQINPYRM (280 aa)). The Zn(2+) site is built by C39, C42, C58, C61, C66, C69, C81, and C84. The RING-type; degenerate zinc-finger motif lies at 39–85 (CQICGDDVGLNPDGEPFVACNECAFPVCRDCYEYERREGTQNCPQCK). The segment covering 233-246 (LHQMRNDGGGKDWD) has biased composition (basic and acidic residues). The interval 233–257 (LHQMRNDGGGKDWDGDGDDGDLPLM) is disordered. The chain crosses the membrane as a helical span at residues 281-301 (VIIIRLVVLGFFFHYRVMHPV). At 302–303 (PD) the chain is on the extracellular side. A helical membrane pass occupies residues 304-324 (AFALWLISVICEIWFAMSWIL). The Cytoplasmic segment spans residues 325–869 (DQFPKWFPIE…CLERFSYINS (545 aa)). UDP-alpha-D-glucose-binding residues include S363, K369, E370, and D399. D399 is an active-site residue. The stretch at 453–480 (VRERRAMKREYEEFKVRINALVAKAQKV) forms a coiled coil. K540 provides a ligand contact to UDP-alpha-D-glucose. 2 residues coordinate Mn(2+): K541 and D565. D793 is an active-site residue. A helical transmembrane segment spans residues 870 to 890 (IVYPFTSIPLLAYCTLPAICL). The Extracellular segment spans residues 891-902 (LTGKFITPELTN). Residues 903–923 (VASLWFMSLFICIFATGILEM) traverse the membrane as a helical segment. Topologically, residues 924–939 (RWSGVGIDDWWRNEQF) are cytoplasmic. The helical transmembrane segment at 940 to 960 (WVIGGVSSHLFALFQGLLKVI) threads the bilayer. Residues 961 to 988 (AGIDTSFTVTSKGGDDEEFSELYTFKWT) are Extracellular-facing. The chain crosses the membrane as a helical span at residues 989–1009 (TLLIPPTTLLLLNFIGVVAGV). Topologically, residues 1010–1020 (SNAINNGYESW) are cytoplasmic. The helical transmembrane segment at 1021–1041 (GPLFGKLFFAFWVIVHLYPFL) threads the bilayer. Topologically, residues 1042–1050 (KGLVGRQNR) are extracellular. Residues 1051–1071 (TPTIVIVWSILLASIFSLLWV) form a helical membrane-spanning segment. The Cytoplasmic segment spans residues 1072–1093 (RIDPFLAKNDGPLLEECGLDCN).

The protein belongs to the glycosyltransferase 2 family. Plant cellulose synthase subfamily. The cofactor is Mn(2+). It depends on Zn(2+) as a cofactor.

Its subcellular location is the cell membrane. It carries out the reaction [(1-&gt;4)-beta-D-glucosyl](n) + UDP-alpha-D-glucose = [(1-&gt;4)-beta-D-glucosyl](n+1) + UDP + H(+). It participates in glycan metabolism; plant cellulose biosynthesis. Probable catalytic subunit of cellulose synthase terminal complexes ('rosettes'), required for beta-1,4-glucan microfibril crystallization, a major mechanism of the cell wall formation. The polypeptide is Probable cellulose synthase A catalytic subunit 3 [UDP-forming] (CESA3) (Oryza sativa subsp. japonica (Rice)).